The sequence spans 250 residues: tRNA (guanine-N(1)-)-methyltransferase (250 aa).

S-adenosyl-L-methionine contacts are provided by residues Gly-116 and 136–141 (IGDYVL).

It belongs to the RNA methyltransferase TrmD family. In terms of assembly, homodimer.

It is found in the cytoplasm. The catalysed reaction is guanosine(37) in tRNA + S-adenosyl-L-methionine = N(1)-methylguanosine(37) in tRNA + S-adenosyl-L-homocysteine + H(+). Specifically methylates guanosine-37 in various tRNAs. In Pseudomonas fluorescens (strain ATCC BAA-477 / NRRL B-23932 / Pf-5), this protein is tRNA (guanine-N(1)-)-methyltransferase.